We begin with the raw amino-acid sequence, 97 residues long: MLKMNLANLQLFAHKKGGGSTSNGRDSQAKRLGAKAADGQTVTGGSILYRQRGTHIYPGVNVGRGGDDTLFAKVEGVVRFERKGRDKKQVSVYPIAK.

Residues Met-1–Phe-12 constitute a propeptide that is removed on maturation. The segment at His-14 to Ala-37 is disordered.

It belongs to the bacterial ribosomal protein bL27 family. The N-terminus is cleaved by ribosomal processing cysteine protease Prp.

This Streptococcus gordonii (strain Challis / ATCC 35105 / BCRC 15272 / CH1 / DL1 / V288) protein is Large ribosomal subunit protein bL27.